The sequence spans 354 residues: Release factor glutamine methyltransferase (354 aa).

Residues 174 to 178, aspartate 197, and asparagine 241 each bind S-adenosyl-L-methionine; that span reads GSGSG. 241–244 lines the substrate pocket; that stretch reads NPPY.

It belongs to the protein N5-glutamine methyltransferase family. PrmC subfamily.

It carries out the reaction L-glutaminyl-[peptide chain release factor] + S-adenosyl-L-methionine = N(5)-methyl-L-glutaminyl-[peptide chain release factor] + S-adenosyl-L-homocysteine + H(+). Methylates the class 1 translation termination release factors RF1/PrfA and RF2/PrfB on the glutamine residue of the universally conserved GGQ motif. This Fusobacterium nucleatum subsp. nucleatum (strain ATCC 25586 / DSM 15643 / BCRC 10681 / CIP 101130 / JCM 8532 / KCTC 2640 / LMG 13131 / VPI 4355) protein is Release factor glutamine methyltransferase.